We begin with the raw amino-acid sequence, 485 residues long: Keratin, type I cytoskeletal 14 (485 aa).

A compositionally biased stretch (polar residues) spans 1-15; sequence MATCSRQFTSSSSMK. Residues 1 to 21 form a disordered region; the sequence is MATCSRQFTSSSSMKGSCGIG. Residues 1-121 form a head region; sequence MATCSRQFTS…GLGDGLLVGS (121 aa). The tract at residues 122–157 is coil 1A; the sequence is EKVTMQNLNDRLATYLDKVRALEEANSDLEVKIRDW. The IF rod domain occupies 122 to 433; it reads EKVTMQNLND…RLLEGEDAHL (312 aa). The tract at residues 158 to 175 is linker 1; the sequence is YQRQRPTEIKDYSPYFKT. The interval 176–267 is coil 1B; that stretch reads IEDLKSKILA…KNHEEEMASM (92 aa). Positions 268-290 are linker 12; it reads RGQVGGDVNVEMDAAPGVDLSRI. The interval 291–429 is coil 2; the sequence is LNEMRDQYEK…ATYRRLLEGE (139 aa). Residues 430–485 are tail; the sequence is DAHLSSAQFSSSSQFSSGSQSSRDVTSTNRQIRTKVMDVHDGKVVSTHEQVLRTKN. The interval 432-485 is interaction with Type I keratins and keratin filaments; that stretch reads HLSSAQFSSSSQFSSGSQSSRDVTSTNRQIRTKVMDVHDGKVVSTHEQVLRTKN. Low complexity predominate over residues 437-451; the sequence is QFSSSSQFSSGSQSS. Residues 437–458 form a disordered region; it reads QFSSSSQFSSGSQSSRDVTSTN. Residue Ser448 is modified to Phosphoserine.

The protein belongs to the intermediate filament family. As to quaternary structure, heterotetramer of two type I and two type II keratins. Forms a disulfide-linked heterodimer (via 2B domains) with KRT5 (via 2B domains). Forms a heterodimer with KRT1; the interaction is more abundant in the absence of KRT5. Interacts with TRADD and with keratin filaments. Associates with other type I keratins. Interacts with EPPK1. Interacts with KLHL24. Interacts with PKP1 (via N-terminus) and PKP2. Post-translationally, a disulfide bond is formed between rather than within filaments and promotes the formation of a keratin filament cage around the nucleus. In terms of processing, ubiquitinated by the BCR(KLHL24) E3 ubiquitin ligase complex. In terms of tissue distribution, expressed in most cells of squamous cell carcinomas, in spinous and suprabasal cells around the branching papillary region of papillomas, and weakly in a few proliferative cells of hyperplastic tissue.

The protein localises to the cytoplasm. Its subcellular location is the nucleus. Functionally, the nonhelical tail domain is involved in promoting KRT5-KRT14 filaments to self-organize into large bundles and enhances the mechanical properties involved in resilience of keratin intermediate filaments in vitro. In Rattus norvegicus (Rat), this protein is Keratin, type I cytoskeletal 14 (Krt14).